The sequence spans 622 residues: 1-deoxy-D-xylulose-5-phosphate synthase (622 aa).

Residues histidine 74 and 115-117 each bind thiamine diphosphate; that span reads GHS. A Mg(2+)-binding site is contributed by aspartate 146. Thiamine diphosphate-binding positions include 147–148, asparagine 177, phenylalanine 285, and glutamate 366; that span reads GA. Asparagine 177 contributes to the Mg(2+) binding site.

Belongs to the transketolase family. DXPS subfamily. Homodimer. Requires Mg(2+) as cofactor. Thiamine diphosphate is required as a cofactor.

The enzyme catalyses D-glyceraldehyde 3-phosphate + pyruvate + H(+) = 1-deoxy-D-xylulose 5-phosphate + CO2. The protein operates within metabolic intermediate biosynthesis; 1-deoxy-D-xylulose 5-phosphate biosynthesis; 1-deoxy-D-xylulose 5-phosphate from D-glyceraldehyde 3-phosphate and pyruvate: step 1/1. Its function is as follows. Catalyzes the acyloin condensation reaction between C atoms 2 and 3 of pyruvate and glyceraldehyde 3-phosphate to yield 1-deoxy-D-xylulose-5-phosphate (DXP). The protein is 1-deoxy-D-xylulose-5-phosphate synthase of Magnetococcus marinus (strain ATCC BAA-1437 / JCM 17883 / MC-1).